We begin with the raw amino-acid sequence, 558 residues long: Glucose-6-phosphate isomerase (558 aa).

Residue Glu362 is the Proton donor of the active site. Catalysis depends on residues His393 and Lys523.

This sequence belongs to the GPI family.

It is found in the cytoplasm. It catalyses the reaction alpha-D-glucose 6-phosphate = beta-D-fructose 6-phosphate. Its pathway is carbohydrate degradation; glycolysis; D-glyceraldehyde 3-phosphate and glycerone phosphate from D-glucose: step 2/4. In Drosophila simulans (Fruit fly), this protein is Glucose-6-phosphate isomerase (Pgi).